Consider the following 101-residue polypeptide: Small ribosomal subunit protein uS14 (101 aa).

It belongs to the universal ribosomal protein uS14 family. As to quaternary structure, part of the 30S ribosomal subunit. Contacts proteins S3 and S10.

In terms of biological role, binds 16S rRNA, required for the assembly of 30S particles and may also be responsible for determining the conformation of the 16S rRNA at the A site. In Paraburkholderia phytofirmans (strain DSM 17436 / LMG 22146 / PsJN) (Burkholderia phytofirmans), this protein is Small ribosomal subunit protein uS14.